The sequence spans 201 residues: Recombination protein RecR (201 aa).

Residues 60–75 form a C4-type zinc finger; that stretch reads CSVCGNVDTSDPCTIC. The Toprim domain maps to 83–178; it reads ATLIVVEDVS…RVTKLAHGVP (96 aa).

This sequence belongs to the RecR family.

In terms of biological role, may play a role in DNA repair. It seems to be involved in an RecBC-independent recombinational process of DNA repair. It may act with RecF and RecO. This is Recombination protein RecR from Chelativorans sp. (strain BNC1).